The primary structure comprises 164 residues: Phosphopantetheine adenylyltransferase (164 aa).

Serine 9 is a binding site for substrate. Residues 9 to 10 and histidine 17 each bind ATP; that span reads SF. The substrate site is built by lysine 41, leucine 73, and lysine 87. Residues 88–90, glutamate 98, and 123–129 each bind ATP; these read GLR and YSYISSS.

This sequence belongs to the bacterial CoaD family. Homohexamer. Mg(2+) is required as a cofactor.

The protein localises to the cytoplasm. The catalysed reaction is (R)-4'-phosphopantetheine + ATP + H(+) = 3'-dephospho-CoA + diphosphate. It participates in cofactor biosynthesis; coenzyme A biosynthesis; CoA from (R)-pantothenate: step 4/5. Its function is as follows. Reversibly transfers an adenylyl group from ATP to 4'-phosphopantetheine, yielding dephospho-CoA (dPCoA) and pyrophosphate. The protein is Phosphopantetheine adenylyltransferase of Clostridium perfringens (strain 13 / Type A).